We begin with the raw amino-acid sequence, 515 residues long: Maturase K (515 aa).

The protein belongs to the intron maturase 2 family. MatK subfamily.

It is found in the plastid. It localises to the chloroplast. Functionally, usually encoded in the trnK tRNA gene intron. Probably assists in splicing its own and other chloroplast group II introns. The chain is Maturase K from Pinus tabuliformis (Chinese red pine).